We begin with the raw amino-acid sequence, 560 residues long: Formate--tetrahydrofolate ligase (560 aa).

69–76 (TPAGEGKS) provides a ligand contact to ATP.

This sequence belongs to the formate--tetrahydrofolate ligase family.

It carries out the reaction (6S)-5,6,7,8-tetrahydrofolate + formate + ATP = (6R)-10-formyltetrahydrofolate + ADP + phosphate. It participates in one-carbon metabolism; tetrahydrofolate interconversion. The protein is Formate--tetrahydrofolate ligase of Listeria monocytogenes serotype 4a (strain HCC23).